Reading from the N-terminus, the 321-residue chain is Ubiquinone biosynthesis protein COQ4, mitochondrial (321 aa).

His205, Asp206, His209, and Glu221 together coordinate Zn(2+).

This sequence belongs to the COQ4 family. Component of a multi-subunit COQ enzyme complex, composed of at least COQ3, COQ4, COQ5, COQ6, COQ7 and COQ9. Zn(2+) serves as cofactor.

The protein resides in the mitochondrion inner membrane. It carries out the reaction a 4-hydroxy-3-methoxy-5-(all-trans-polyprenyl)benzoate + H(+) = a 2-methoxy-6-(all-trans-polyprenyl)phenol + CO2. It participates in cofactor biosynthesis; ubiquinone biosynthesis. Functionally, lyase that catalyzes the C1-decarboxylation of 4-hydroxy-3-methoxy-5-(all-trans-polyprenyl)benzoic acid into 2-methoxy-6-(all-trans-polyprenyl)phenol during ubiquinone biosynthesis. This Candida tropicalis (strain ATCC MYA-3404 / T1) (Yeast) protein is Ubiquinone biosynthesis protein COQ4, mitochondrial.